A 505-amino-acid chain; its full sequence is Beta-agarase (505 aa).

The first 23 residues, 1–23 (MLKVIPWLLVTSSLVAIPTYIHA), serve as a signal peptide directing secretion. Glutamate 200 functions as the Proton donor in the catalytic mechanism. The active-site Nucleophile is glutamate 322.

Belongs to the glycosyl hydrolase 86 family.

It is found in the secreted. It catalyses the reaction Hydrolysis of (1-&gt;4)-beta-D-galactosidic linkages in agarose, giving the tetramer as the predominant product.. Hydrolase that cleaves agar at the (1-&gt;4) linkage, producing tetrameric saccharide molecules. Is specific for agar and agarose and does not digest alginate or carrageenan. In Pseudoalteromonas atlantica (Alteromonas atlantica), this protein is Beta-agarase.